Here is a 398-residue protein sequence, read N- to C-terminus: Leucine carboxyl methyltransferase 1 (398 aa).

Residues 1–11 (MSASQIPNLNT) show a composition bias toward polar residues. The interval 1–54 (MSASQIPNLNTLRRGGGRGRLRGRGGFETGAPSEDRHGSRGLAAQDRVVQGTDN) is disordered. Residues arginine 97, glycine 123, aspartate 151, and 201 to 202 (DL) contribute to the S-adenosyl-L-methionine site. The span at 208–218 (SGSATTSRSPS) shows a compositional bias: low complexity. Residues 208-232 (SGSATTSRSPSSPNPAEKDQPPCPL) form a disordered region. Residue glutamate 246 coordinates S-adenosyl-L-methionine.

This sequence belongs to the methyltransferase superfamily. LCMT family.

It catalyses the reaction [phosphatase 2A protein]-C-terminal L-leucine + S-adenosyl-L-methionine = [phosphatase 2A protein]-C-terminal L-leucine methyl ester + S-adenosyl-L-homocysteine. Its function is as follows. Methylates the carboxyl group of the C-terminal leucine residue of protein phosphatase 2A catalytic subunits to form alpha-leucine ester residues. The protein is Leucine carboxyl methyltransferase 1 (ppm1) of Aspergillus fumigatus (strain ATCC MYA-4609 / CBS 101355 / FGSC A1100 / Af293) (Neosartorya fumigata).